We begin with the raw amino-acid sequence, 66 residues long: uncharacterized protein (66 aa).

2 helical membrane passes run 3–23 and 34–54; these read LIHV…PFAN and FILA…AIVY.

The protein localises to the cell membrane. This is an uncharacterized protein from Bacillus subtilis (strain 168).